The following is a 301-amino-acid chain: MRKIKIGLALGSGAARGWSHIGVINALKKVGIEIDIVAGCSIGSLVGAAYACDRLSALEDWVTSFSYWDVLRLMDLSWQRGGLLRGERVFNQYREIMPETEIENCSRRFAAVATNLSTGRELWFTEGDLHLAIRASCSIPGLMAPVAHNGYWLVDGAVVNPIPISLTRALGADIVIAVDLQHDAHLMQQDLLSFNVSEENSENGDSLPWHARLKERLGSITTRRAVTAPTATEIMTTSIQVLENRLKRNRMAGDPPDILIQPVCPQISTLDFHRAHAAIAAGQLAVERKMDELLPLVRTNI.

The PNPLA domain maps to 8 to 168 (LALGSGAARG…VNPIPISLTR (161 aa)). Residues 39–43 (GCSIG) carry the GXSXG motif. The active-site Nucleophile is Ser41. Asp155 (proton acceptor) is an active-site residue. The DGA/G signature appears at 155–157 (DGA).

This sequence belongs to the NTE family.

In Escherichia coli (strain K12), this protein is NTE family protein RssA (rssA).